We begin with the raw amino-acid sequence, 315 residues long: tRNA dimethylallyltransferase (315 aa).

G13 to T20 provides a ligand contact to ATP. Substrate is bound at residue T15–T20. 3 interaction with substrate tRNA regions span residues D38–L41, Q162–R166, and R245–R250.

It belongs to the IPP transferase family. In terms of assembly, monomer. The cofactor is Mg(2+).

The catalysed reaction is adenosine(37) in tRNA + dimethylallyl diphosphate = N(6)-dimethylallyladenosine(37) in tRNA + diphosphate. Catalyzes the transfer of a dimethylallyl group onto the adenine at position 37 in tRNAs that read codons beginning with uridine, leading to the formation of N6-(dimethylallyl)adenosine (i(6)A). The protein is tRNA dimethylallyltransferase of Methylobacillus flagellatus (strain ATCC 51484 / DSM 6875 / VKM B-1610 / KT).